The primary structure comprises 69 residues: Large ribosomal subunit protein bL28 (69 aa).

It belongs to the bacterial ribosomal protein bL28 family.

In Nitratidesulfovibrio vulgaris (strain DSM 19637 / Miyazaki F) (Desulfovibrio vulgaris), this protein is Large ribosomal subunit protein bL28.